We begin with the raw amino-acid sequence, 319 residues long: Cell division protein PomZ (319 aa).

61–68 contacts ATP; the sequence is KGGTGKTS.

It belongs to the ParA family. Interacts with FtsZ in pull-down experiments.

It is found in the cytoplasm. Spatial regulator of cell division that is involved in identifying the incipient division site, recruiting FtsZ to the division site and stabilizing the Z-ring. Binds ATP and GTP. This chain is Cell division protein PomZ, found in Myxococcus xanthus (strain DK1622).